We begin with the raw amino-acid sequence, 197 residues long: Putative NADH dehydrogenase/NAD(P)H nitroreductase Plav_3612 (197 aa).

Belongs to the nitroreductase family. HadB/RutE subfamily. FMN serves as cofactor.

The protein is Putative NADH dehydrogenase/NAD(P)H nitroreductase Plav_3612 of Parvibaculum lavamentivorans (strain DS-1 / DSM 13023 / NCIMB 13966).